The chain runs to 235 residues: Ribitol-5-phosphate cytidylyltransferase (235 aa).

CTP-binding positions include 7–10 (LAGG), 82–88 (GADRNTS), and Ser-113.

This sequence belongs to the IspD/TarI cytidylyltransferase family. TarI subfamily.

It catalyses the reaction D-ribitol 5-phosphate + CTP + H(+) = CDP-L-ribitol + diphosphate. Its pathway is cell wall biogenesis; poly(ribitol phosphate) teichoic acid biosynthesis. In terms of biological role, catalyzes the transfer of the cytidylyl group of CTP to D-ribitol 5-phosphate. This Streptococcus pneumoniae (strain CGSP14) protein is Ribitol-5-phosphate cytidylyltransferase.